We begin with the raw amino-acid sequence, 199 residues long: GTP cyclohydrolase-2 (199 aa).

49–53 (RVHSE) contributes to the GTP binding site. Positions 54, 65, and 67 each coordinate Zn(2+). GTP is bound by residues Gln70, 92–94 (EGR), and Thr114. Asp126 (proton acceptor) is an active-site residue. Residue Arg128 is the Nucleophile of the active site. GTP contacts are provided by Thr149 and Lys154.

This sequence belongs to the GTP cyclohydrolase II family. It depends on Zn(2+) as a cofactor.

It carries out the reaction GTP + 4 H2O = 2,5-diamino-6-hydroxy-4-(5-phosphoribosylamino)-pyrimidine + formate + 2 phosphate + 3 H(+). It participates in cofactor biosynthesis; riboflavin biosynthesis; 5-amino-6-(D-ribitylamino)uracil from GTP: step 1/4. Its function is as follows. Catalyzes the conversion of GTP to 2,5-diamino-6-ribosylamino-4(3H)-pyrimidinone 5'-phosphate (DARP), formate and pyrophosphate. In Baumannia cicadellinicola subsp. Homalodisca coagulata, this protein is GTP cyclohydrolase-2.